Here is a 763-residue protein sequence, read N- to C-terminus: MSELLSFALFLASVLIYAWKAGRNTWWFAATLTVLGLFVVLNITLFASDYFTGDGINDAVLYTLTNSLTGAGVSKYILPGIGIVLGLAAVFGALGWILRRRRHHPHHFGYSLLALLLALGSVDASPAFRQITELVKSQSRDGDPDFAAYYKEPSRTIPDPKLNLVYIYGESLERTYFDNEAFPDLTPELGALKNEGLDFSHTQQLPGTDYTIAGMVASQCGIPLFAPFEGNASASVSSFFPQNICLGDILKNSGYQNYFVQGANLRFAGKDVFLKSHGFDHLYGSEELKSVVADPHYRNDWGFYDDTVLDEAWKKFEELSRSGQRFSLFTLTVDTHHPDGFISRTCNRKKYDFDGKPNQSFSAVSCSQENIATFINKIKASPWFKDTVIVVSSDHLAMNNTAWKYLNKQDRNNLFFVIRGDKPQQETLAVKRNTMDNGATVLDILGGDNYLGLGRSSLSGQSMSEIFLNIKEKTLAWKPDIIRLWKFPKEMKEFTIDQQKNMIAFSGSHFRLPLLLRVSDKRVEPLPESEYSAPLRFQLADFAPRDNFVWVDRCYKMAQLWAPELALSTDWCVSQGQLGGQQIVQHVDKAIWKGKTAFKDTVIDMARYKGNVDTLKIVDNDIRYKADSFIFNVAGAPEEVKQFSGISRPESWGRWSNAQLGDEVKIEYKHPLPKKFDLVITAKAYGNNASRPIPVRVGNEEQTLVLGNEVTTTTLHFDNPTDADTLVIVPPEPVSTNEGNILGHSPRKLGIGMVEIKVVEREG.

4 helical membrane-spanning segments follow: residues 1–21, 26–46, 77–97, and 108–128; these read MSELLSFALFLASVLIYAWKA, WWFAATLTVLGLFVVLNITLF, ILPGIGIVLGLAAVFGALGWI, and FGYSLLALLLALGSVDASPAF.

It belongs to the OpgB family.

It is found in the cell inner membrane. It catalyses the reaction a phosphatidylglycerol + a membrane-derived-oligosaccharide D-glucose = a 1,2-diacyl-sn-glycerol + a membrane-derived-oligosaccharide 6-(glycerophospho)-D-glucose.. It functions in the pathway glycan metabolism; osmoregulated periplasmic glucan (OPG) biosynthesis. Transfers a phosphoglycerol residue from phosphatidylglycerol to the membrane-bound nascent glucan backbones. The sequence is that of Phosphoglycerol transferase I from Escherichia coli O7:K1 (strain IAI39 / ExPEC).